Here is a 255-residue protein sequence, read N- to C-terminus: 3-alpha-(or 20-beta)-hydroxysteroid dehydrogenase (255 aa).

10–34 (IITGGARGLGAEAARQAVAAGARVV) lines the NAD(+) pocket. Serine 139 serves as a coordination point for substrate. Tyrosine 152 (proton acceptor) is an active-site residue.

Belongs to the short-chain dehydrogenases/reductases (SDR) family. Homotetramer.

The catalysed reaction is androstan-3alpha,17beta-diol + NAD(+) = 17beta-hydroxyandrostanone + NADH + H(+). Its pathway is lipid metabolism; C21-steroid hormone metabolism. This is 3-alpha-(or 20-beta)-hydroxysteroid dehydrogenase from Streptomyces exfoliatus (Streptomyces hydrogenans).